A 264-amino-acid polypeptide reads, in one-letter code: S-adenosylmethionine decarboxylase proenzyme (264 aa).

Ser113 (schiff-base intermediate with substrate; via pyruvic acid) is an active-site residue. Ser113 is modified (pyruvic acid (Ser); by autocatalysis). The active-site Proton acceptor; for processing activity is the His118. Cys141 serves as the catalytic Proton donor; for catalytic activity.

The protein belongs to the prokaryotic AdoMetDC family. Type 2 subfamily. As to quaternary structure, heterooctamer of four alpha and four beta chains arranged as a tetramer of alpha/beta heterodimers. Pyruvate is required as a cofactor. Post-translationally, is synthesized initially as an inactive proenzyme. Formation of the active enzyme involves a self-maturation process in which the active site pyruvoyl group is generated from an internal serine residue via an autocatalytic post-translational modification. Two non-identical subunits are generated from the proenzyme in this reaction, and the pyruvate is formed at the N-terminus of the alpha chain, which is derived from the carboxyl end of the proenzyme. The post-translation cleavage follows an unusual pathway, termed non-hydrolytic serinolysis, in which the side chain hydroxyl group of the serine supplies its oxygen atom to form the C-terminus of the beta chain, while the remainder of the serine residue undergoes an oxidative deamination to produce ammonia and the pyruvoyl group blocking the N-terminus of the alpha chain.

It catalyses the reaction S-adenosyl-L-methionine + H(+) = S-adenosyl 3-(methylsulfanyl)propylamine + CO2. The protein operates within amine and polyamine biosynthesis; S-adenosylmethioninamine biosynthesis; S-adenosylmethioninamine from S-adenosyl-L-methionine: step 1/1. Catalyzes the decarboxylation of S-adenosylmethionine to S-adenosylmethioninamine (dcAdoMet), the propylamine donor required for the synthesis of the polyamines spermine and spermidine from the diamine putrescine. This Xylella fastidiosa (strain Temecula1 / ATCC 700964) protein is S-adenosylmethionine decarboxylase proenzyme.